We begin with the raw amino-acid sequence, 329 residues long: 7,8-didemethyl-8-hydroxy-5-deazariboflavin synthase (329 aa).

In terms of domain architecture, Radical SAM core spans 6-244; the sequence is ITYTKNVFLP…EEISIQVAPN (239 aa). 3 residues coordinate [4Fe-4S] cluster: Cys-20, Cys-24, and Cys-27.

It belongs to the radical SAM superfamily. CofG family. As to quaternary structure, consists of two subunits, CofG and CofH. [4Fe-4S] cluster serves as cofactor.

It catalyses the reaction 5-amino-5-(4-hydroxybenzyl)-6-(D-ribitylimino)-5,6-dihydrouracil + S-adenosyl-L-methionine = 7,8-didemethyl-8-hydroxy-5-deazariboflavin + 5'-deoxyadenosine + L-methionine + NH4(+) + H(+). It participates in cofactor biosynthesis; coenzyme F0 biosynthesis. Its function is as follows. Catalyzes the radical-mediated synthesis of 7,8-didemethyl-8-hydroxy-5-deazariboflavin from 5-amino-5-(4-hydroxybenzyl)-6-(D-ribitylimino)-5,6-dihydrouracil. This Methanoregula boonei (strain DSM 21154 / JCM 14090 / 6A8) protein is 7,8-didemethyl-8-hydroxy-5-deazariboflavin synthase.